We begin with the raw amino-acid sequence, 405 residues long: MDHLTMPKFGPLAGLRVVFSGIEIAGPFAGQMFAEWGAEVIWIENVAWADTIRVQPNYPQLSRRNLHALSLNIFKDEGREAFLKLMETTDIFIEASKGPAFARRGITDEVLWQHNPKLVIAHLSGFGQYGTEEYTNLPAYNTIAQAFSGYLIQNGDVDQPMPAFPYTADYFSGLTATTAALAALHKVRETGKGESIDIAMYEVMLRMGQYFMMDYFNGGEMCPRMTKGKDPYYAGCGLYKCADGYIVMELVGITQIAECFKDIGLAHLLGTPEIPEGTQLIHRIECPYGPLVEEKLDAWLAAHTIAEVKERFAELNIACAKVLTVPELESNPQYVARESITQWQTMDGRTCKGPNIMPKFKNNPGQIWRGMPSHGMDTAAILKNIGYSENDIQELVSKGLAKVED.

2 residues coordinate CoA: K97 and R104. Catalysis depends on D169, which acts as the Nucleophile.

The protein belongs to the CoA-transferase III family. CaiB subfamily. As to quaternary structure, homodimer.

Its subcellular location is the cytoplasm. The enzyme catalyses crotonobetainyl-CoA + (R)-carnitine = crotonobetaine + (R)-carnitinyl-CoA. The catalysed reaction is 4-(trimethylamino)butanoyl-CoA + (R)-carnitine = (R)-carnitinyl-CoA + 4-(trimethylamino)butanoate. The protein operates within amine and polyamine metabolism; carnitine metabolism. In terms of biological role, catalyzes the reversible transfer of the CoA moiety from gamma-butyrobetainyl-CoA to L-carnitine to generate L-carnitinyl-CoA and gamma-butyrobetaine. Is also able to catalyze the reversible transfer of the CoA moiety from gamma-butyrobetainyl-CoA or L-carnitinyl-CoA to crotonobetaine to generate crotonobetainyl-CoA. In Escherichia coli O127:H6 (strain E2348/69 / EPEC), this protein is L-carnitine CoA-transferase.